Here is a 172-residue protein sequence, read N- to C-terminus: MSEKDKKELTQECEELKEKYKELEEYAKRLKAEYENYREEVAREKRELIKNANEYLILKLIPVLDDFERALNQGEKRDAFYEGVKMIYKKLLNVLEKEGLTKIHVGEKFDPFEHEAVERVETEDVEEYTVLEVVESGYKFHGKVLKPAKVKVAVKPRKKEAEKVEKPSDEKE.

The protein belongs to the GrpE family. Homodimer.

It localises to the cytoplasm. In terms of biological role, participates actively in the response to hyperosmotic and heat shock by preventing the aggregation of stress-denatured proteins, in association with DnaK and GrpE. It is the nucleotide exchange factor for DnaK and may function as a thermosensor. Unfolded proteins bind initially to DnaJ; upon interaction with the DnaJ-bound protein, DnaK hydrolyzes its bound ATP, resulting in the formation of a stable complex. GrpE releases ADP from DnaK; ATP binding to DnaK triggers the release of the substrate protein, thus completing the reaction cycle. Several rounds of ATP-dependent interactions between DnaJ, DnaK and GrpE are required for fully efficient folding. The sequence is that of Protein GrpE from Thermotoga petrophila (strain ATCC BAA-488 / DSM 13995 / JCM 10881 / RKU-1).